The primary structure comprises 679 residues: MIDRYKHQQLRIGSVSPQQISTWANKILPNGEIVGEVTKPYTFHYKTNKPERDGLFCERIFGPIKSGICACGTYRVIGDKKEDPNFCEQCGVEFVDSRIRRYQMGYIKLACPATHVWYLKRLPSYIANLLDKPLKELEGLVYCDFSFARPVAKKPTFLRLRGLFEYEIQSWKYSIPLFFTTQGFDTFRNREISTGAGAIREQLAGLDLRVIIDYSLVEWKELGEERSTGNEWEDRKIGRRKQFLVRRVELAKHFIRTNIEPEWMVLCLLPVLPPELRPIIQMDGGKLMSSDINELYRRVIYRNNILADLLTTSRSTPGDLVMGQEKLVQEAVDTLLDNGIRSRPVRDGQNKVYKSFSDVIEGKEGRFRETLLGKRVDYSGRSVIVVGPTLPLHRCGLPREIAIELFQTFLIRGLIRQHLASDIVGAKSQIREKEPIVWEILQQVMQGHPVLLNRAPTLHRLGIQAFQPILVEGRAICLHPLVCKGFNADFDGDQMAVHVPLSLEAQTEARLLMFSHMNLLSPAMGDPISVPTQDMLIGLYILTSGNPRGICTNRYNPWNRSNYQNERISDNNWKKKEPFFCNSYDAIGAYRQKRIHLDSPLWLRWRLDQRVIASREVPIEVQYESLGTYHEIYGHYIIVRSVKTEILWMYIRTTVGHISLFREMEEAIQGFCRARWYLS.

Zn(2+) is bound by residues cysteine 69, cysteine 71, cysteine 87, and cysteine 90. Mg(2+)-binding residues include aspartate 489, aspartate 491, and aspartate 493.

This sequence belongs to the RNA polymerase beta' chain family. RpoC1 subfamily. In terms of assembly, in plastids the minimal PEP RNA polymerase catalytic core is composed of four subunits: alpha, beta, beta', and beta''. When a (nuclear-encoded) sigma factor is associated with the core the holoenzyme is formed, which can initiate transcription. Requires Mg(2+) as cofactor. It depends on Zn(2+) as a cofactor.

The protein localises to the plastid. The protein resides in the chloroplast. The catalysed reaction is RNA(n) + a ribonucleoside 5'-triphosphate = RNA(n+1) + diphosphate. DNA-dependent RNA polymerase catalyzes the transcription of DNA into RNA using the four ribonucleoside triphosphates as substrates. The polypeptide is DNA-directed RNA polymerase subunit beta' (Oenothera argillicola (Appalachian evening primrose)).